Here is an 862-residue protein sequence, read N- to C-terminus: Autotaxin (862 aa).

The signal sequence occupies residues 1–27 (MARQGCFGSYQVISLFTFAIGVNLCLG). Positions 28-35 (FTASRIKR) are cleaved as a propeptide — removed by furin. An N-linked (GlcNAc...) asparagine glycan is attached at Asn53. SMB domains follow at residues 54-97 (TSGS…LKTA) and 98-142 (RGWE…GESH). Cystine bridges form between Cys58–Cys75, Cys62–Cys93, Cys73–Cys86, Cys79–Cys85, Cys102–Cys119, Cys107–Cys137, Cys117–Cys130, Cys123–Cys129, Cys148–Cys194, and Cys156–Cys350. The short motif at 126–128 (RGD) is the Cell attachment site element. The tract at residues 144-501 (VDDDCEEIRV…PTFKYRTKVP (358 aa)) is phosphodiesterase domain. Zn(2+)-binding residues include Asp171 and Thr209. Thr209 acts as the Nucleophile in catalysis. 1-(9Z-octadecenoyl)-sn-glycero-3-phosphate is bound by residues Thr209, Asn230, and Asp311. 3 residues coordinate 1-hexadecanoyl-sn-glycero-3-phosphate: Thr209, Asn230, and Asp311. Thr209, Asn230, and Asp311 together coordinate 1-tetradecanoyl-sn-glycerol 3-phosphate. 4 residues coordinate Zn(2+): Asp311, His315, Asp358, and His359. 5 disulfide bridges follow: Cys366/Cys468, Cys413/Cys805, Cys566/Cys666, Cys568/Cys651, and Cys774/Cys784. N-linked (GlcNAc...) asparagine glycosylation occurs at Asn410. His474 contacts Zn(2+). His474 lines the 1-(9Z-octadecenoyl)-sn-glycero-3-phosphate pocket. Residue His474 coordinates 1-hexadecanoyl-sn-glycero-3-phosphate. Position 474 (His474) interacts with 1-tetradecanoyl-sn-glycerol 3-phosphate. Asn524 carries N-linked (GlcNAc...) asparagine glycosylation. Residues 597–862 (LYGRPAVLYR…TYLHTYESEI (266 aa)) form a nuclease-like domain region. Ca(2+) contacts are provided by Asp739, Asn741, Asn743, Leu745, and Asp747. Asn806 carries an N-linked (GlcNAc...) asparagine glycan. Residues 829-850 (IEHLTGLDFYRKTSRSYSEILT) form a required for secretion region.

This sequence belongs to the nucleotide pyrophosphatase/phosphodiesterase family. Requires Zn(2+) as cofactor. Ca(2+) serves as cofactor. Post-translationally, N-glycosylation, but not furin-cleavage, plays a critical role on secretion and on lysoPLD activity. Secretion requires simultaneous glycosylation on Asn-53 and Asn-410, while probable glycosylation of Asn-410 has a preferential role on lysoPLD activity. Not O-glycosylated. In terms of processing, the interdomain disulfide bond between Cys-413 and Cys-805 is essential for catalytic activity. As to expression, expressed in brain and adipose tissue.

The protein resides in the secreted. The enzyme catalyses a 1-O-alkyl-sn-glycero-3-phosphoethanolamine + H2O = a 1-O-alkyl-sn-glycero-3-phosphate + ethanolamine + H(+). It carries out the reaction a 1-acyl-sn-glycero-3-phosphoethanolamine + H2O = a 1-acyl-sn-glycero-3-phosphate + ethanolamine + H(+). It catalyses the reaction 1-(9Z-octadecenoyl)-sn-glycero-3-phosphoethanolamine + H2O = 1-(9Z-octadecenoyl)-sn-glycero-3-phosphate + ethanolamine + H(+). The catalysed reaction is a 1-O-alkyl-sn-glycero-3-phosphocholine + H2O = a 1-O-alkyl-sn-glycero-3-phosphate + choline + H(+). The enzyme catalyses 1-O-(9Z-octadecenyl)-sn-glycero-3-phosphocholine + H2O = 1-O-(9Z-octadecenyl)-sn-glycero-3-phosphate + choline + H(+). It carries out the reaction 1-O-hexadecyl-sn-glycero-3-phosphocholine + H2O = 1-O-hexadecyl-sn-glycero-3-phosphate + choline + H(+). It catalyses the reaction a 1-O-(1Z-alkenyl)-sn-glycero-3-phosphocholine + H2O = a 1-O-(1Z-alkenyl)-sn-glycero-3-phosphate + choline + H(+). The catalysed reaction is a 1-acyl-sn-glycero-3-phosphocholine + H2O = a 1-acyl-sn-glycero-3-phosphate + choline + H(+). The enzyme catalyses 1-dodecanoyl-sn-glycero-3-phosphocholine + H2O = 1-dodecanoyl-sn-glycerol 3-phosphate + choline + H(+). It carries out the reaction 1-(9Z-octadecenoyl)-sn-glycero-3-phosphocholine + H2O = 1-(9Z-octadecenoyl)-sn-glycero-3-phosphate + choline + H(+). It catalyses the reaction 1-tetradecanoyl-sn-glycero-3-phosphocholine + H2O = 1-tetradecanoyl-sn-glycerol 3-phosphate + choline + H(+). The catalysed reaction is 1-decanoyl-sn-glycero-3-phosphocholine + H2O = 1-decanoyl-sn-glycero-3-phosphate + choline + H(+). The enzyme catalyses 1-octadecanoyl-sn-glycero-3-phosphocholine + H2O = 1-octadecanoyl-sn-glycero-3-phosphate + choline + H(+). It carries out the reaction 1-hexadecanoyl-sn-glycero-3-phosphocholine + H2O = 1-hexadecanoyl-sn-glycero-3-phosphate + choline + H(+). It catalyses the reaction 1-hexanoyl-sn-glycero-3-phosphocholine + H2O = 1-hexanoyl-sn-glycero-3-phosphate + choline + H(+). The catalysed reaction is 1-(9Z,12Z)-octadecadienoyl-sn-glycero-3-phosphocholine + H2O = 1-(9Z,12Z)-octadecadienoyl-sn-glycero-3-phosphate + choline + H(+). The enzyme catalyses sphing-4-enine-phosphocholine + H2O = sphing-4-enine 1-phosphate + choline + H(+). It carries out the reaction 1-(5Z,8Z,11Z,14Z-eicosatetraenoyl)-sn-glycero-3-phosphocholine + H2O = 1-(5Z,8Z,11Z,14Z-eicosatetraenoyl)-sn-glycero-3-phosphate + choline + H(+). It catalyses the reaction a 2-acyl-sn-glycero-3-phosphocholine + H2O = a 2-acyl-sn-glycerol 3-phosphate + choline + H(+). The catalysed reaction is a 1,2-diacyl-sn-glycero-3-phosphocholine + H2O = a 1,2-diacyl-sn-glycero-3-phosphate + choline + H(+). The enzyme catalyses 1,2-dioctanoyl-sn-glycero-3-phosphocholine + H2O = 1,2-dioctanoyl-sn-glycero-3-phosphate + choline + H(+). It carries out the reaction 1,2-didecanoyl-sn-glycero-3-phosphocholine + H2O = 1,2-didecanoyl-sn-glycero-3-phosphate + choline + H(+). It catalyses the reaction a 1-acyl-sn-glycero-3-phospho-L-serine + H2O = a 1-acyl-sn-glycero-3-phosphate + L-serine + H(+). The catalysed reaction is 1-(9Z-octadecenoyl)-sn-glycero-3-phospho-L-serine + H2O = 1-(9Z-octadecenoyl)-sn-glycero-3-phosphate + L-serine + H(+). The enzyme catalyses a 2-acyl-sn-glycero-3-phospho-L-serine + H2O = a 2-acyl-sn-glycerol 3-phosphate + L-serine + H(+). Its activity is regulated as follows. Inhibited by EDTA and EGTA. In terms of biological role, secreted lysophospholipase D that hydrolyzes lysophospholipids to produce the signaling molecule lysophosphatidic acid (LPA) in extracellular fluids. Its major substrate is lysophosphatidylcholine. Can also act on sphingosylphosphorylcholine producing sphingosine-1-phosphate, a modulator of cell motility. Can hydrolyze, in vitro, bis-pNPP, to some extent pNP-TMP, and barely ATP. Involved in several motility-related processes such as angiogenesis and neurite outgrowth. Acts as an angiogenic factor by stimulating migration of smooth muscle cells and microtubule formation. Stimulates migration of melanoma cells, probably via a pertussis toxin-sensitive G protein. May have a role in induction of parturition. Possible involvement in cell proliferation and adipose tissue development. Required for LPA production in activated platelets, cleaves the sn-1 lysophospholipids to generate sn-1 lysophosphatidic acids containing predominantly 18:2 and 20:4 fatty acids. Shows a preference for the sn-1 to the sn-2 isomer of 1-O-alkyl-sn-glycero-3-phosphocholine (lyso-PAF). The protein is Autotaxin of Mus musculus (Mouse).